A 416-amino-acid polypeptide reads, in one-letter code: Gamma-glutamyl phosphate reductase (416 aa).

This sequence belongs to the gamma-glutamyl phosphate reductase family.

Its subcellular location is the cytoplasm. It catalyses the reaction L-glutamate 5-semialdehyde + phosphate + NADP(+) = L-glutamyl 5-phosphate + NADPH + H(+). The protein operates within amino-acid biosynthesis; L-proline biosynthesis; L-glutamate 5-semialdehyde from L-glutamate: step 2/2. Functionally, catalyzes the NADPH-dependent reduction of L-glutamate 5-phosphate into L-glutamate 5-semialdehyde and phosphate. The product spontaneously undergoes cyclization to form 1-pyrroline-5-carboxylate. This chain is Gamma-glutamyl phosphate reductase, found in Vibrio atlanticus (strain LGP32) (Vibrio splendidus (strain Mel32)).